A 446-amino-acid polypeptide reads, in one-letter code: Elongation factor Ts, mitochondrial (446 aa).

Residues M1–F33 constitute a mitochondrion transit peptide.

Belongs to the EF-Ts family.

The protein localises to the mitochondrion. Functionally, associates with the EF-Tu.GDP complex and induces the exchange of GDP to GTP. It remains bound to the aminoacyl-tRNA.EF-Tu.GTP complex up to the GTP hydrolysis stage on the ribosome. The chain is Elongation factor Ts, mitochondrial from Mycosarcoma maydis (Corn smut fungus).